Reading from the N-terminus, the 247-residue chain is D-alanyl-D-alanine dipeptidase (247 aa).

2 residues coordinate Zn(2+): His140 and Asp147. Glu215 (proton donor/acceptor) is an active-site residue. His218 provides a ligand contact to Zn(2+).

This sequence belongs to the peptidase M15D family. It depends on Zn(2+) as a cofactor.

It localises to the cytoplasm. It catalyses the reaction D-alanyl-D-alanine + H2O = 2 D-alanine. Functionally, catalyzes hydrolysis of the D-alanyl-D-alanine dipeptide. May have a role in cell-wall turnover. This Synechocystis sp. (strain ATCC 27184 / PCC 6803 / Kazusa) protein is D-alanyl-D-alanine dipeptidase.